Consider the following 425-residue polypeptide: Serine--tRNA ligase (425 aa).

Residue 233 to 235 (TAE) coordinates L-serine. An ATP-binding site is contributed by 264–266 (RRE). Position 287 (glutamate 287) interacts with L-serine. An ATP-binding site is contributed by 351–354 (EVSS). Residue serine 386 participates in L-serine binding.

Belongs to the class-II aminoacyl-tRNA synthetase family. Type-1 seryl-tRNA synthetase subfamily. In terms of assembly, homodimer. The tRNA molecule binds across the dimer.

It localises to the cytoplasm. The enzyme catalyses tRNA(Ser) + L-serine + ATP = L-seryl-tRNA(Ser) + AMP + diphosphate + H(+). It carries out the reaction tRNA(Sec) + L-serine + ATP = L-seryl-tRNA(Sec) + AMP + diphosphate + H(+). It participates in aminoacyl-tRNA biosynthesis; selenocysteinyl-tRNA(Sec) biosynthesis; L-seryl-tRNA(Sec) from L-serine and tRNA(Sec): step 1/1. Catalyzes the attachment of serine to tRNA(Ser). Is also able to aminoacylate tRNA(Sec) with serine, to form the misacylated tRNA L-seryl-tRNA(Sec), which will be further converted into selenocysteinyl-tRNA(Sec). This Thermosipho melanesiensis (strain DSM 12029 / CIP 104789 / BI429) protein is Serine--tRNA ligase.